The chain runs to 212 residues: Translation initiation factor IF-3 (212 aa).

The segment covering 190-203 (LVDKNSDSQDKSVS) has biased composition (basic and acidic residues). Residues 190 to 212 (LVDKNSDSQDKSVSEEDTNEGEQ) form a disordered region.

The protein belongs to the IF-3 family. Monomer.

The protein resides in the cytoplasm. IF-3 binds to the 30S ribosomal subunit and shifts the equilibrium between 70S ribosomes and their 50S and 30S subunits in favor of the free subunits, thus enhancing the availability of 30S subunits on which protein synthesis initiation begins. This Mycoplasmopsis fermentans (Mycoplasma fermentans) protein is Translation initiation factor IF-3.